Reading from the N-terminus, the 351-residue chain is Adenine deaminase (351 aa).

The Zn(2+) site is built by H19, H21, and H208. E211 functions as the Proton donor in the catalytic mechanism. A Zn(2+)-binding site is contributed by D288. A substrate-binding site is contributed by D289.

The protein belongs to the metallo-dependent hydrolases superfamily. Adenosine and AMP deaminases family. Adenine deaminase type 2 subfamily. The cofactor is Zn(2+).

It is found in the cytoplasm. The protein resides in the nucleus. The enzyme catalyses adenine + H2O + H(+) = hypoxanthine + NH4(+). Its function is as follows. Catalyzes the hydrolytic deamination of adenine to hypoxanthine. Plays an important role in the purine salvage pathway and in nitrogen catabolism. This chain is Adenine deaminase (aah1), found in Aspergillus oryzae (strain ATCC 42149 / RIB 40) (Yellow koji mold).